The following is a 120-amino-acid chain: NAD(P)H-quinone oxidoreductase subunit 3, chloroplastic (120 aa).

3 consecutive transmembrane segments (helical) span residues 9 to 29 (IFWA…LISG), 64 to 84 (MFAL…PWAM), and 88 to 108 (VLGV…IVGL).

This sequence belongs to the complex I subunit 3 family. In terms of assembly, NDH is composed of at least 16 different subunits, 5 of which are encoded in the nucleus.

The protein resides in the plastid. Its subcellular location is the chloroplast thylakoid membrane. The catalysed reaction is a plastoquinone + NADH + (n+1) H(+)(in) = a plastoquinol + NAD(+) + n H(+)(out). It carries out the reaction a plastoquinone + NADPH + (n+1) H(+)(in) = a plastoquinol + NADP(+) + n H(+)(out). In terms of biological role, NDH shuttles electrons from NAD(P)H:plastoquinone, via FMN and iron-sulfur (Fe-S) centers, to quinones in the photosynthetic chain and possibly in a chloroplast respiratory chain. The immediate electron acceptor for the enzyme in this species is believed to be plastoquinone. Couples the redox reaction to proton translocation, and thus conserves the redox energy in a proton gradient. The polypeptide is NAD(P)H-quinone oxidoreductase subunit 3, chloroplastic (Ranunculus macranthus (Large buttercup)).